Consider the following 152-residue polypeptide: Methylglyoxal synthase (152 aa).

The MGS-like domain occupies 6-152 (RTLATEKNIA…YEGYLKERLK (147 aa)). Substrate-binding positions include histidine 19, lysine 23, 45 to 48 (TGTT), and 65 to 66 (SG). Aspartate 71 serves as the catalytic Proton donor/acceptor. Residue histidine 98 participates in substrate binding.

The protein belongs to the methylglyoxal synthase family.

The catalysed reaction is dihydroxyacetone phosphate = methylglyoxal + phosphate. Its function is as follows. Catalyzes the formation of methylglyoxal from dihydroxyacetone phosphate. This Proteus mirabilis (strain HI4320) protein is Methylglyoxal synthase.